The chain runs to 320 residues: Lipoyl synthase (320 aa).

The tract at residues 1-26 (MVTVVDRVTSRRLRHPEKMHRPDTSI) is disordered. Residues Cys59, Cys64, Cys70, Cys85, Cys89, Cys92, and Ser298 each contribute to the [4Fe-4S] cluster site. A Radical SAM core domain is found at 71–287 (WSQRHASFMI…AKIGKVKGFL (217 aa)).

It belongs to the radical SAM superfamily. Lipoyl synthase family. [4Fe-4S] cluster is required as a cofactor.

It localises to the cytoplasm. It catalyses the reaction [[Fe-S] cluster scaffold protein carrying a second [4Fe-4S](2+) cluster] + N(6)-octanoyl-L-lysyl-[protein] + 2 oxidized [2Fe-2S]-[ferredoxin] + 2 S-adenosyl-L-methionine + 4 H(+) = [[Fe-S] cluster scaffold protein] + N(6)-[(R)-dihydrolipoyl]-L-lysyl-[protein] + 4 Fe(3+) + 2 hydrogen sulfide + 2 5'-deoxyadenosine + 2 L-methionine + 2 reduced [2Fe-2S]-[ferredoxin]. It participates in protein modification; protein lipoylation via endogenous pathway; protein N(6)-(lipoyl)lysine from octanoyl-[acyl-carrier-protein]: step 2/2. In terms of biological role, catalyzes the radical-mediated insertion of two sulfur atoms into the C-6 and C-8 positions of the octanoyl moiety bound to the lipoyl domains of lipoate-dependent enzymes, thereby converting the octanoylated domains into lipoylated derivatives. This is Lipoyl synthase from Bartonella quintana (strain Toulouse) (Rochalimaea quintana).